A 79-amino-acid polypeptide reads, in one-letter code: MIKKINAVISNLFLTLIRFYRSWISPLLGPSCRFVPTCSEYGVEAIEKHGPWKGGWLTLKRLLRCNPLTPCGYDPVPDK.

Belongs to the UPF0161 family.

The protein resides in the cell inner membrane. Its function is as follows. Could be involved in insertion of integral membrane proteins into the membrane. The polypeptide is Putative membrane protein insertion efficiency factor (Prochlorococcus marinus (strain SARG / CCMP1375 / SS120)).